Reading from the N-terminus, the 180-residue chain is Ribulose bisphosphate carboxylase small subunit, chloroplastic (180 aa).

A chloroplast-targeting transit peptide spans Met1–Ser57.

It belongs to the RuBisCO small chain family. Heterohexadecamer of 8 large and 8 small subunits.

It localises to the plastid. It is found in the chloroplast. Functionally, ruBisCO catalyzes two reactions: the carboxylation of D-ribulose 1,5-bisphosphate, the primary event in carbon dioxide fixation, as well as the oxidative fragmentation of the pentose substrate. Both reactions occur simultaneously and in competition at the same active site. Although the small subunit is not catalytic it is essential for maximal activity. This Marchantia paleacea (Liverwort) protein is Ribulose bisphosphate carboxylase small subunit, chloroplastic.